A 158-amino-acid polypeptide reads, in one-letter code: ATP synthase subunit delta (158 aa).

It belongs to the ATPase delta chain family. F-type ATPases have 2 components, F(1) - the catalytic core - and F(0) - the membrane proton channel. F(1) has five subunits: alpha(3), beta(3), gamma(1), delta(1), epsilon(1). F(0) has three main subunits: a(1), b(2) and c(10-14). The alpha and beta chains form an alternating ring which encloses part of the gamma chain. F(1) is attached to F(0) by a central stalk formed by the gamma and epsilon chains, while a peripheral stalk is formed by the delta and b chains.

It localises to the cell membrane. Its function is as follows. F(1)F(0) ATP synthase produces ATP from ADP in the presence of a proton or sodium gradient. F-type ATPases consist of two structural domains, F(1) containing the extramembraneous catalytic core and F(0) containing the membrane proton channel, linked together by a central stalk and a peripheral stalk. During catalysis, ATP synthesis in the catalytic domain of F(1) is coupled via a rotary mechanism of the central stalk subunits to proton translocation. Functionally, this protein is part of the stalk that links CF(0) to CF(1). It either transmits conformational changes from CF(0) to CF(1) or is implicated in proton conduction. The protein is ATP synthase subunit delta of Roseiflexus castenholzii (strain DSM 13941 / HLO8).